A 1483-amino-acid chain; its full sequence is Heme-responsive zinc finger transcription factor HAP1 (1483 aa).

Residues 1 to 50 (MSNTPYNSSVPSIASMTQSSVSRSPNMHTATTPGANTSSNSPPLHMSSDS) show a composition bias toward polar residues. Residues 1 to 56 (MSNTPYNSSVPSIASMTQSSVSRSPNMHTATTPGANTSSNSPPLHMSSDSSKIKRK) are disordered. 6 residues coordinate Zn(2+): cysteine 64, cysteine 67, cysteine 74, cysteine 81, cysteine 84, and cysteine 93. A DNA-binding region (zn(2)-C6 fungal-type) is located at residues 64-93 (CTICRKRKVKCDKLRPHCQQCTKTGVAHLC). Residues 105–134 (EKELLKDNELKKLRERVKSLEKTLSKVHSS) adopt a coiled-coil conformation. The interval 126–208 (KTLSKVHSSP…ANSSSLSISN (83 aa)) is disordered. Residues 130-142 (KVHSSPSSNSLKS) are compositionally biased toward low complexity. Polar residues-rich tracts occupy residues 143-152 (YNTPESSNLF) and 160-176 (TLVN…SHMH). Low complexity predominate over residues 177 to 208 (QQQQQQQQQEQQQDFSRSANANANSSSLSISN). A heme-responsive; required for HMC formation region spans residues 244-444 (KGDPYLKLLW…NTIPHHQPQS (201 aa)). HRM repeat units lie at residues 280–285 (KCPINH), 299–304 (KCPVDH), 323–328 (KCPVDH), 347–352 (RCPVDH), 389–394 (KCPVDH), and 415–420 (RCPIDH). Composition is skewed to polar residues over residues 432 to 447 (STHN…SGSH) and 706 to 734 (QLNA…NPTL). Disordered regions lie at residues 432 to 458 (STHN…NRKH) and 706 to 767 (QLNA…KENQ). The span at 735-759 (NNNMSAATTNSSSRSGSADSRSGSN) shows a compositional bias: low complexity. The HRM 7 repeat unit spans residues 1192–1197 (KCPVYQ).

In terms of assembly, binds DNA as a homodimer. Interacts with SRO9 and YDJ1. In the absence of heme, binds to at least four cellular proteins, including YDJ1 and SRO9, forming a high-molecular-weight complex (HMC) which results in repression of its activity and dictates its DNA-binding specificity.

It is found in the nucleus. Its function is as follows. Regulation of oxygen dependent gene expression. It modulates the expression of Iso-1 (CYP1) and Iso-2 (CYP3) cytochrome c. In response to heme, promotes transcription of genes encoding functions required for respiration, controlling oxidative damage and repression of anaerobic genes. Binds to the sequence 5'-CGGNNNTNNCGG-3'. The sequence is that of Heme-responsive zinc finger transcription factor HAP1 (HAP1) from Saccharomyces cerevisiae (strain Lalvin EC1118 / Prise de mousse) (Baker's yeast).